A 364-amino-acid polypeptide reads, in one-letter code: WAT1-related protein At3g30340 (364 aa).

The next 10 helical transmembrane spans lie at 9-29 (WKAV…NVMF), 41-61 (VATT…AIFL), 76-96 (SLFF…LIGL), 102-122 (TFSL…ALVF), 138-158 (LLGT…KGTA), 183-203 (WAMG…WFIV), 215-235 (YTST…LSLI), 251-271 (VLAL…GMSW), 277-297 (GAVF…IFSF), and 304-324 (IYCG…ILLW). 2 consecutive EamA domains span residues 26-152 (NVMF…LVLT) and 195-323 (IIWS…YILL).

Belongs to the drug/metabolite transporter (DMT) superfamily. Plant drug/metabolite exporter (P-DME) (TC 2.A.7.4) family.

Its subcellular location is the membrane. The sequence is that of WAT1-related protein At3g30340 from Arabidopsis thaliana (Mouse-ear cress).